The chain runs to 58 residues: Photosystem II reaction center protein K (58 aa).

Residues 1-21 constitute a propeptide that is removed on maturation; sequence MTVSYSIYLENSLHFGDALLA. The helical transmembrane segment at 29-49 threads the bilayer; that stretch reads IFDPIVDVMPVIPVFFLLLAF.

Belongs to the PsbK family. In terms of assembly, PSII is composed of 1 copy each of membrane proteins PsbA, PsbB, PsbC, PsbD, PsbE, PsbF, PsbH, PsbI, PsbJ, PsbK, PsbL, PsbM, PsbT, PsbX, PsbY, PsbZ, Psb30/Ycf12, at least 3 peripheral proteins of the oxygen-evolving complex and a large number of cofactors. It forms dimeric complexes.

It is found in the plastid. It localises to the chloroplast thylakoid membrane. In terms of biological role, one of the components of the core complex of photosystem II (PSII). PSII is a light-driven water:plastoquinone oxidoreductase that uses light energy to abstract electrons from H(2)O, generating O(2) and a proton gradient subsequently used for ATP formation. It consists of a core antenna complex that captures photons, and an electron transfer chain that converts photonic excitation into a charge separation. This chain is Photosystem II reaction center protein K, found in Adiantum capillus-veneris (Maidenhair fern).